The chain runs to 337 residues: Ketol-acid reductoisomerase (NADP(+)) (337 aa).

In terms of domain architecture, KARI N-terminal Rossmann spans 3–183 (VEMFYDDDAD…GGTRAGVIKT (181 aa)). NADP(+) is bound by residues 26 to 29 (YGSQ), Lys49, Ser52, Ser54, and 84 to 87 (DTAQ). His109 is an active-site residue. Gly135 lines the NADP(+) pocket. The KARI C-terminal knotted domain occupies 184-329 (TFKEETETDL…KKLRDLMSWV (146 aa)). Positions 192, 196, 228, and 232 each coordinate Mg(2+). Ser253 is a substrate binding site.

The protein belongs to the ketol-acid reductoisomerase family. Mg(2+) serves as cofactor.

It carries out the reaction (2R)-2,3-dihydroxy-3-methylbutanoate + NADP(+) = (2S)-2-acetolactate + NADPH + H(+). The catalysed reaction is (2R,3R)-2,3-dihydroxy-3-methylpentanoate + NADP(+) = (S)-2-ethyl-2-hydroxy-3-oxobutanoate + NADPH + H(+). Its pathway is amino-acid biosynthesis; L-isoleucine biosynthesis; L-isoleucine from 2-oxobutanoate: step 2/4. It participates in amino-acid biosynthesis; L-valine biosynthesis; L-valine from pyruvate: step 2/4. In terms of biological role, involved in the biosynthesis of branched-chain amino acids (BCAA). Catalyzes an alkyl-migration followed by a ketol-acid reduction of (S)-2-acetolactate (S2AL) to yield (R)-2,3-dihydroxy-isovalerate. In the isomerase reaction, S2AL is rearranged via a Mg-dependent methyl migration to produce 3-hydroxy-3-methyl-2-ketobutyrate (HMKB). In the reductase reaction, this 2-ketoacid undergoes a metal-dependent reduction by NADPH to yield (R)-2,3-dihydroxy-isovalerate. This Rhodococcus erythropolis (strain PR4 / NBRC 100887) protein is Ketol-acid reductoisomerase (NADP(+)).